The following is a 480-amino-acid chain: ATP-grasp enzyme ankG (480 aa).

The tract at residues 1 to 30 (MYQISLKATKSAAEPTSSTDASHDDRQVER) is disordered. Residues 21–30 (ASHDDRQVER) show a composition bias toward basic and acidic residues.

It catalyses the reaction NK13650 D + L-aspartate + ATP = NK13650 C + AMP + diphosphate + H(+). The catalysed reaction is NK13650 B + L-aspartate + ATP = NK13650 A + AMP + diphosphate + H(+). It functions in the pathway secondary metabolite biosynthesis. ATP-grasp enzyme; part of the ank cluster that mediates the biosynthesis of NK13650 C, a highly modified cyclo-arginine-tyrosine dipeptide. AnkG catalyzes the last step of the pathway via amidation NK13650 D with L-Asp to produce NK13650 C. AnkG also amidates NK13650 B into NK13650 A. Within the pathway, the cyclodipeptide synthase ankA acts as the scaffold-generating enzyme and is responsible for formation of the cyclo-Arg-Tyr diketopiperazine (cRY) from L-Arg and L-Tyr. The ankA product cRY is desaturated by the cytochrome P450 monooxygenase ankB to yield a dehydro-cyclodipeptide intermediate. The FAD-dependent monooxygenase ankC then installs the m-OH, ankD catalyzes the attachment of L-homoserine, and ankE ligates citrate to the ankD product to yield NK13650 B. The O-methyltransferase ankF is responsible for methylation of the C-17 phenol group of NK13650 B to produce NK13650 D. Amidation of NK13650 D with L-Asp by ankG then leads to the production of NK13650 C, whereas amidation of NK13650 B produces NK13650 A. The protein is ATP-grasp enzyme ankG of Aspergillus thermomutatus (Neosartorya pseudofischeri).